The primary structure comprises 435 residues: Palmitoyltransferase pfa4 (435 aa).

Residues M1 to R10 are Cytoplasmic-facing. A helical membrane pass occupies residues L11–F31. Residues L32–N48 are Lumenal-facing. The helical transmembrane segment at I49–V69 threads the bilayer. The Cytoplasmic segment spans residues P70–S129. The 51-residue stretch at R91–F141 folds into the DHHC domain. C121 functions as the S-palmitoyl cysteine intermediate in the catalytic mechanism. Residues H130–L150 traverse the membrane as a helical segment. The Lumenal portion of the chain corresponds to E151–G179. A helical membrane pass occupies residues H180–L200. Over R201–Q435 the chain is Cytoplasmic. Basic and acidic residues predominate over residues R359–E368. Residues R359–E408 form a disordered region. Positions A376 to H388 are enriched in acidic residues. Residues G389–G405 show a composition bias toward basic and acidic residues.

It belongs to the DHHC palmitoyltransferase family. PFA4 subfamily.

It localises to the endoplasmic reticulum membrane. The catalysed reaction is L-cysteinyl-[protein] + hexadecanoyl-CoA = S-hexadecanoyl-L-cysteinyl-[protein] + CoA. Its function is as follows. Mediates the reversible addition of palmitate to target proteins, thereby regulating their membrane association and biological function. The protein is Palmitoyltransferase pfa4 of Emericella nidulans (strain FGSC A4 / ATCC 38163 / CBS 112.46 / NRRL 194 / M139) (Aspergillus nidulans).